The chain runs to 513 residues: Noroxomaritidine synthase 1 (513 aa).

A helical membrane pass occupies residues 18–34; sequence ILIAIACLVVFSLLRSA. Cysteine 458 serves as a coordination point for heme.

Belongs to the cytochrome P450 family. Heme is required as a cofactor. Mostly expressed in stems, and, to a lower extent, in bulbs, roots, leaves and flowers.

It localises to the membrane. It carries out the reaction 4'-O-methylnorbelladine + reduced [NADPH--hemoprotein reductase] + O2 = (10bR,4aS)-noroxomaritidine + oxidized [NADPH--hemoprotein reductase] + 2 H2O + H(+). It catalyses the reaction 4'-O-methylnorbelladine + reduced [NADPH--hemoprotein reductase] + O2 = (10bS,4aR)-noroxomaritidine + oxidized [NADPH--hemoprotein reductase] + 2 H2O + H(+). Its pathway is alkaloid biosynthesis. In terms of biological role, cytochrome P450 that catalyzes an intramolecular para-para' C-C phenol coupling of 4'-O-methylnorbelladine in alkaloids biosynthesis, including haemanthamine- and crinamine-type alkaloids, promising anticancer agents. Catalyzes the formation of (10bR,4aS)-noroxomaritidine and (10bS,4aR)-noroxomaritidine from 4'-O-methylnorbelladine. In Narcissus pseudonarcissus (Daffodil), this protein is Noroxomaritidine synthase 1.